The primary structure comprises 152 residues: Glutamyl-tRNA(Gln) amidotransferase subunit F, mitochondrial (152 aa).

This sequence belongs to the GatF family. In terms of assembly, subunit of the heterotrimeric GatFAB amidotransferase (AdT) complex, composed of A, B and F subunits.

It is found in the mitochondrion inner membrane. It catalyses the reaction L-glutamyl-tRNA(Gln) + L-glutamine + ATP + H2O = L-glutaminyl-tRNA(Gln) + L-glutamate + ADP + phosphate + H(+). Functionally, allows the formation of correctly charged Gln-tRNA(Gln) through the transamidation of misacylated Glu-tRNA(Gln) in the mitochondria. The reaction takes place in the presence of glutamine and ATP through an activated gamma-phospho-Glu-tRNA(Gln). Required for proper protein synthesis within the mitochondrion. This is Glutamyl-tRNA(Gln) amidotransferase subunit F, mitochondrial from Komagataella phaffii (strain GS115 / ATCC 20864) (Yeast).